The sequence spans 76 residues: Acyl carrier protein (76 aa).

Positions 2 to 76 (SSIFDKVKAI…SAVEYIKENQ (75 aa)) constitute a Carrier domain. Ser36 bears the O-(pantetheine 4'-phosphoryl)serine mark.

This sequence belongs to the acyl carrier protein (ACP) family. Post-translationally, 4'-phosphopantetheine is transferred from CoA to a specific serine of apo-ACP by AcpS. This modification is essential for activity because fatty acids are bound in thioester linkage to the sulfhydryl of the prosthetic group.

Its subcellular location is the cytoplasm. Its pathway is lipid metabolism; fatty acid biosynthesis. Its function is as follows. Carrier of the growing fatty acid chain in fatty acid biosynthesis. This chain is Acyl carrier protein, found in Heliobacterium modesticaldum (strain ATCC 51547 / Ice1).